The primary structure comprises 338 residues: Heat-inducible transcription repressor HrcA (338 aa).

This sequence belongs to the HrcA family.

Functionally, negative regulator of class I heat shock genes (grpE-dnaK-dnaJ and groELS operons). Prevents heat-shock induction of these operons. The chain is Heat-inducible transcription repressor HrcA from Thermotoga sp. (strain RQ2).